We begin with the raw amino-acid sequence, 452 residues long: Protoheme IX farnesyltransferase, mitochondrial (452 aa).

A mitochondrion-targeting transit peptide spans 1-27 (MSLVIQPLLMRALNPNLSSILISGRGF). 7 consecutive transmembrane segments (helical) span residues 152–172 (VLVMLSAICSYALSPYPATVL), 235–255 (ILWLGVNPTVAFLGFSNIALY), 267–287 (IINTWVGALVGAIPPLMGWAA), 291–311 (LSHPGAWCLAGLLYAWQFPHF), 341–361 (VALRYSLLMFPLCFGLSYFNV), 364–386 (WYYQLDSAFVNAWMSLWAFKFYF), and 417–437 (TFWVSVLHLPAVLILAILHKK).

This sequence belongs to the UbiA prenyltransferase family.

It is found in the mitochondrion membrane. Converts protoheme IX and farnesyl diphosphate to heme O. This chain is Protoheme IX farnesyltransferase, mitochondrial (COX10), found in Kluyveromyces lactis (strain ATCC 8585 / CBS 2359 / DSM 70799 / NBRC 1267 / NRRL Y-1140 / WM37) (Yeast).